The primary structure comprises 261 residues: 3-hydroxyacyl-CoA dehydrogenase type-2 (261 aa).

Residue Ala-2 is modified to N-acetylalanine. Residues Ser-20, Leu-22, and Asp-41 each contribute to the NAD(+) site. An N6-acetyllysine; alternate modification is found at Lys-53. Lys-53 is subject to N6-succinyllysine; alternate. Residues Asp-64 and Val-65 each coordinate NAD(+). Lys-69 is modified (N6-acetyllysine). NAD(+) is bound at residue Cys-91. 2 positions are modified to N6-acetyllysine: Lys-99 and Lys-105. Ser-155 contacts substrate. Residues Tyr-168, Lys-172, Phe-201, and Thr-203 each coordinate NAD(+). The Proton acceptor role is filled by Tyr-168. Lys-212 is modified (N6-acetyllysine; alternate). At Lys-212 the chain carries N6-succinyllysine; alternate.

This sequence belongs to the short-chain dehydrogenases/reductases (SDR) family. Homotetramer. Component of mitochondrial ribonuclease P, a complex composed of TRMT10C/MRPP1, HSD17B10/MRPP2 and PRORP/MRPP3. Interacts with TRMT10C/MRPP1; forming the MRPP1-MRPP2 subcomplex of the mitochondrial ribonuclease P complex.

It localises to the mitochondrion. The protein resides in the mitochondrion matrix. It is found in the mitochondrion nucleoid. The enzyme catalyses a (3S)-3-hydroxyacyl-CoA + NAD(+) = a 3-oxoacyl-CoA + NADH + H(+). The catalysed reaction is (2S,3S)-3-hydroxy-2-methylbutanoyl-CoA + NAD(+) = 2-methyl-3-oxobutanoyl-CoA + NADH + H(+). It catalyses the reaction testosterone + NAD(+) = androst-4-ene-3,17-dione + NADH + H(+). It carries out the reaction 5alpha-androstane-3alpha,17beta-diol + NAD(+) = 17beta-hydroxy-5alpha-androstan-3-one + NADH + H(+). The enzyme catalyses 17beta-estradiol + NAD(+) = estrone + NADH + H(+). The catalysed reaction is cholate + NAD(+) = 3alpha,12alpha-dihydroxy-7-oxo-5beta-cholanate + NADH + H(+). It catalyses the reaction (3S)-3-hydroxybutanoyl-CoA + NAD(+) = acetoacetyl-CoA + NADH + H(+). It carries out the reaction (3S)-hydroxyoctanoyl-CoA + NAD(+) = 3-oxooctanoyl-CoA + NADH + H(+). The enzyme catalyses (3S)-hydroxyhexadecanoyl-CoA + NAD(+) = 3-oxohexadecanoyl-CoA + NADH + H(+). The catalysed reaction is 17beta-hydroxy-5alpha-androstan-3-one + NAD(+) = 5alpha-androstan-3,17-dione + NADH + H(+). It catalyses the reaction 5alpha-pregnan-20beta-ol-3-one + NAD(+) = 5alpha-pregnane-3,20-dione + NADH + H(+). It carries out the reaction 3alpha-hydroxy-5alpha-pregnan-20-one + NAD(+) = 5alpha-pregnane-3,20-dione + NADH + H(+). The enzyme catalyses cortisone + NAD(+) = 17alpha-hydroxypregn-4-en-3,11,20-trione-21-al + NADH + H(+). The catalysed reaction is 11-dehydrocorticosterone + NAD(+) = pregn-4-ene-3,11,20,21-tetraone + NADH + H(+). It catalyses the reaction cortisol + NAD(+) = 11beta,17alpha-dihydroxypregn-4-ene-3,20,21-trione + NADH + H(+). It carries out the reaction chenodeoxycholate + NAD(+) = 7-oxolithocholate + NADH + H(+). The enzyme catalyses ursodeoxycholate + NAD(+) = 7-oxolithocholate + NADH + H(+). The catalysed reaction is 3beta,7beta-dihydroxy-5beta-cholan-24-oate + NAD(+) = 3beta-hydroxy-7-oxo-5beta-cholan-24-oate + NADH + H(+). It functions in the pathway amino-acid degradation; L-isoleucine degradation. The protein operates within lipid metabolism; fatty acid beta-oxidation. It participates in steroid metabolism. Its pathway is lipid metabolism; bile acid biosynthesis. Its function is as follows. Mitochondrial dehydrogenase involved in pathways of fatty acid, branched-chain amino acid and steroid metabolism. Acts as (S)-3-hydroxyacyl-CoA dehydrogenase in mitochondrial fatty acid beta-oxidation, a major degradation pathway of fatty acids. Catalyzes the third step in the beta-oxidation cycle, namely the reversible conversion of (S)-3-hydroxyacyl-CoA to 3-ketoacyl-CoA. Preferentially accepts straight medium- and short-chain acyl-CoA substrates with highest efficiency for (3S)-hydroxybutanoyl-CoA. Acts as 3-hydroxy-2-methylbutyryl-CoA dehydrogenase in branched-chain amino acid catabolic pathway. Catalyzes the oxidation of 3-hydroxy-2-methylbutanoyl-CoA into 2-methyl-3-oxobutanoyl-CoA, a step in isoleucine degradation pathway. Has hydroxysteroid dehydrogenase activity toward steroid hormones and bile acids. Catalyzes the oxidation of 3alpha-, 17beta-, 20beta- and 21-hydroxysteroids and 7alpha- and 7beta-hydroxy bile acids. Oxidizes allopregnanolone/brexanolone at the 3alpha-hydroxyl group, which is known to be critical for the activation of gamma-aminobutyric acid receptors (GABAARs) chloride channel. Has phospholipase C-like activity toward cardiolipin and its oxidized species. Likely oxidizes the 2'-hydroxyl in the head group of cardiolipin to form a ketone intermediate that undergoes nucleophilic attack by water and fragments into diacylglycerol, dihydroxyacetone and orthophosphate. Has higher affinity for cardiolipin with oxidized fatty acids and may degrade these species during the oxidative stress response to protect cells from apoptosis. By interacting with intracellular amyloid-beta, it may contribute to the neuronal dysfunction associated with Alzheimer disease (AD). Essential for structural and functional integrity of mitochondria. In addition to mitochondrial dehydrogenase activity, moonlights as a component of mitochondrial ribonuclease P, a complex that cleaves tRNA molecules in their 5'-ends. Together with TRMT10C/MRPP1, forms a subcomplex of the mitochondrial ribonuclease P, named MRPP1-MRPP2 subcomplex, which displays functions that are independent of the ribonuclease P activity. The MRPP1-MRPP2 subcomplex catalyzes the formation of N(1)-methylguanine and N(1)-methyladenine at position 9 (m1G9 and m1A9, respectively) in tRNAs; HSD17B10/MRPP2 acting as a non-catalytic subunit. The MRPP1-MRPP2 subcomplex also acts as a tRNA maturation platform: following 5'-end cleavage by the mitochondrial ribonuclease P complex, the MRPP1-MRPP2 subcomplex enhances the efficiency of 3'-processing catalyzed by ELAC2, retains the tRNA product after ELAC2 processing and presents the nascent tRNA to the mitochondrial CCA tRNA nucleotidyltransferase TRNT1 enzyme. Associates with mitochondrial DNA complexes at the nucleoids to initiate RNA processing and ribosome assembly. This is 3-hydroxyacyl-CoA dehydrogenase type-2 (HSD17B10) from Bos taurus (Bovine).